Reading from the N-terminus, the 327-residue chain is GMP reductase (327 aa).

The active-site Thioimidate intermediate is the Cys-176. 205–228 (IIADGGIRTHGDIAKSIRFGASMV) is an NADP(+) binding site.

The protein belongs to the IMPDH/GMPR family. GuaC type 2 subfamily.

The catalysed reaction is IMP + NH4(+) + NADP(+) = GMP + NADPH + 2 H(+). Catalyzes the irreversible NADPH-dependent deamination of GMP to IMP. It functions in the conversion of nucleobase, nucleoside and nucleotide derivatives of G to A nucleotides, and in maintaining the intracellular balance of A and G nucleotides. The polypeptide is GMP reductase (Streptococcus pyogenes serotype M28 (strain MGAS6180)).